Reading from the N-terminus, the 347-residue chain is Glutamyl-Q tRNA(Asp) synthetase (347 aa).

L-glutamate-binding positions include 31–35 (RFAPS) and Glu-67. Residues 34-44 (PSPTSALHLGN) carry the 'HIGH' region motif. Positions 121, 123, 143, and 147 each coordinate Zn(2+). Tyr-203 and Arg-221 together coordinate L-glutamate. The 'KMSKS' region motif lies at 259-263 (RLSKS). Residue Lys-262 participates in ATP binding.

This sequence belongs to the class-I aminoacyl-tRNA synthetase family. GluQ subfamily. It depends on Zn(2+) as a cofactor.

Its function is as follows. Catalyzes the tRNA-independent activation of glutamate in presence of ATP and the subsequent transfer of glutamate onto a tRNA(Asp). Glutamate is transferred on the 2-amino-5-(4,5-dihydroxy-2-cyclopenten-1-yl) moiety of the queuosine in the wobble position of the QUC anticodon. This chain is Glutamyl-Q tRNA(Asp) synthetase, found in Cutibacterium acnes (strain DSM 16379 / KPA171202) (Propionibacterium acnes).